A 765-amino-acid polypeptide reads, in one-letter code: Polyribonucleotide nucleotidyltransferase (765 aa).

Residues Asp556 and Asp562 each contribute to the Mg(2+) site. Positions 622–681 (PRITKISIPQNKIGEVIGPKGKTINQITEETGANISIEDDGTVFVSAVGGEAAEAAIEKI) constitute a KH domain. One can recognise an S1 motif domain in the interval 693–762 (GDRFLGTVVK…NRGKISLVPV (70 aa)).

This sequence belongs to the polyribonucleotide nucleotidyltransferase family. Requires Mg(2+) as cofactor.

It localises to the cytoplasm. It carries out the reaction RNA(n+1) + phosphate = RNA(n) + a ribonucleoside 5'-diphosphate. Its function is as follows. Involved in mRNA degradation. Catalyzes the phosphorolysis of single-stranded polyribonucleotides processively in the 3'- to 5'-direction. The polypeptide is Polyribonucleotide nucleotidyltransferase (Corynebacterium urealyticum (strain ATCC 43042 / DSM 7109)).